The sequence spans 282 residues: ATP synthase gamma chain (282 aa).

This sequence belongs to the ATPase gamma chain family. F-type ATPases have 2 components, CF(1) - the catalytic core - and CF(0) - the membrane proton channel. CF(1) has five subunits: alpha(3), beta(3), gamma(1), delta(1), epsilon(1). CF(0) has three main subunits: a, b and c.

Its subcellular location is the cell membrane. Functionally, produces ATP from ADP in the presence of a proton gradient across the membrane. The gamma chain is believed to be important in regulating ATPase activity and the flow of protons through the CF(0) complex. The polypeptide is ATP synthase gamma chain (Clostridium botulinum (strain ATCC 19397 / Type A)).